The chain runs to 167 residues: Gem-associated protein 6 (167 aa).

The 68-residue stretch at 7–74 (KGPLEWQDYI…VQTVETMNEG (68 aa)) folds into the Sm domain. One can recognise an AD domain in the interval 69 to 167 (ETMNEGDHRV…LIEGHLTASQ (99 aa)). Phosphoserine is present on residues Ser95 and Ser166.

In terms of assembly, part of the core SMN complex that contains SMN1, GEMIN2/SIP1, DDX20/GEMIN3, GEMIN4, GEMIN5, GEMIN6, GEMIN7, GEMIN8 and STRAP/UNRIP. Part of the SMN-Sm complex that contains SMN1, GEMIN2/SIP1, DDX20/GEMIN3, GEMIN4, GEMIN5, GEMIN6, GEMIN7, GEMIN8, STRAP/UNRIP and the Sm proteins SNRPB, SNRPD1, SNRPD2, SNRPD3, SNRPE, SNRPF and SNRPG. Interacts with GEMIN7; the interaction is direct. Interacts with GEMIN8; the interaction is direct. Interacts with SNRPB, SNRPD2, SNRPD3 and SNRPE; the interaction is direct.

It localises to the nucleus. The protein resides in the nucleoplasm. It is found in the gem. The protein localises to the cytoplasm. The SMN complex catalyzes the assembly of small nuclear ribonucleoproteins (snRNPs), the building blocks of the spliceosome, and thereby plays an important role in the splicing of cellular pre-mRNAs. Most spliceosomal snRNPs contain a common set of Sm proteins SNRPB, SNRPD1, SNRPD2, SNRPD3, SNRPE, SNRPF and SNRPG that assemble in a heptameric protein ring on the Sm site of the small nuclear RNA to form the core snRNP (Sm core). In the cytosol, the Sm proteins SNRPD1, SNRPD2, SNRPE, SNRPF and SNRPG are trapped in an inactive 6S pICln-Sm complex by the chaperone CLNS1A that controls the assembly of the core snRNP. To assemble core snRNPs, the SMN complex accepts the trapped 5Sm proteins from CLNS1A forming an intermediate. Binding of snRNA inside 5Sm triggers eviction of the SMN complex, thereby allowing binding of SNRPD3 and SNRPB to complete assembly of the core snRNP. The polypeptide is Gem-associated protein 6 (GEMIN6) (Homo sapiens (Human)).